Here is a 138-residue protein sequence, read N- to C-terminus: DNA-directed RNA polymerase subunit omega (138 aa).

Residues 101-138 (AEDDDTLEADGLTIHDGADSDLDLSDDAGQDTDEADED) form a disordered region. A compositionally biased stretch (acidic residues) spans 119–138 (DSDLDLSDDAGQDTDEADED).

Belongs to the RNA polymerase subunit omega family. In terms of assembly, the RNAP catalytic core consists of 2 alpha, 1 beta, 1 beta' and 1 omega subunit. When a sigma factor is associated with the core the holoenzyme is formed, which can initiate transcription.

The enzyme catalyses RNA(n) + a ribonucleoside 5'-triphosphate = RNA(n+1) + diphosphate. Functionally, promotes RNA polymerase assembly. Latches the N- and C-terminal regions of the beta' subunit thereby facilitating its interaction with the beta and alpha subunits. The chain is DNA-directed RNA polymerase subunit omega from Rhodospirillum rubrum (strain ATCC 11170 / ATH 1.1.1 / DSM 467 / LMG 4362 / NCIMB 8255 / S1).